The chain runs to 557 residues: Probable protein kinase UbiB (557 aa).

One can recognise a Protein kinase domain in the interval 121–509 (SFDTVPLASA…RKLQTRVVTA (389 aa)). Residues 127–135 (LASASIAQV) and K154 each bind ATP. The active-site Proton acceptor is D289. Transmembrane regions (helical) follow at residues 506–526 (VVTA…YGLH) and 535–555 (VPVW…VAWL).

Belongs to the ABC1 family. UbiB subfamily.

The protein localises to the cell inner membrane. The protein operates within cofactor biosynthesis; ubiquinone biosynthesis [regulation]. Is probably a protein kinase regulator of UbiI activity which is involved in aerobic coenzyme Q (ubiquinone) biosynthesis. The polypeptide is Probable protein kinase UbiB (Xanthomonas euvesicatoria pv. vesicatoria (strain 85-10) (Xanthomonas campestris pv. vesicatoria)).